A 413-amino-acid chain; its full sequence is Multifunctional CCA protein (413 aa).

The ATP site is built by G8 and R11. CTP contacts are provided by G8 and R11. Mg(2+) is bound by residues E21 and D23. Positions 91, 137, and 140 each coordinate ATP. CTP is bound by residues R91, R137, and R140. The region spanning 228 to 329 is the HD domain; the sequence is CGIHTLMSLR…WRLLQRLDVL (102 aa).

The protein belongs to the tRNA nucleotidyltransferase/poly(A) polymerase family. Bacterial CCA-adding enzyme type 1 subfamily. In terms of assembly, monomer. Can also form homodimers and oligomers. The cofactor is Mg(2+). It depends on Ni(2+) as a cofactor.

It carries out the reaction a tRNA precursor + 2 CTP + ATP = a tRNA with a 3' CCA end + 3 diphosphate. The enzyme catalyses a tRNA with a 3' CCA end + 2 CTP + ATP = a tRNA with a 3' CCACCA end + 3 diphosphate. In terms of biological role, catalyzes the addition and repair of the essential 3'-terminal CCA sequence in tRNAs without using a nucleic acid template. Adds these three nucleotides in the order of C, C, and A to the tRNA nucleotide-73, using CTP and ATP as substrates and producing inorganic pyrophosphate. tRNA 3'-terminal CCA addition is required both for tRNA processing and repair. Also involved in tRNA surveillance by mediating tandem CCA addition to generate a CCACCA at the 3' terminus of unstable tRNAs. While stable tRNAs receive only 3'-terminal CCA, unstable tRNAs are marked with CCACCA and rapidly degraded. The polypeptide is Multifunctional CCA protein (Acinetobacter baylyi (strain ATCC 33305 / BD413 / ADP1)).